Consider the following 134-residue polypeptide: Small ribosomal subunit protein bS16 (134 aa).

Residues 79-134 (AGIAKRPSRNNPTKGEPGKKAQERLALAKQAEEEASAKAAEAAAAAAAPAEEAASE) form a disordered region. Residues 115–134 (AKAAEAAAAAAAPAEEAASE) are compositionally biased toward low complexity.

It belongs to the bacterial ribosomal protein bS16 family.

This Brucella abortus (strain S19) protein is Small ribosomal subunit protein bS16.